Here is a 1025-residue protein sequence, read N- to C-terminus: Serine/threonine-protein kinase TAO2 (1025 aa).

A Protein kinase domain is found at 28–281 (FADLREIGHG…SDMLLKHRFL (254 aa)). ATP-binding positions include 34–42 (IGHGSFGAV) and K57. D151 (proton acceptor) is an active-site residue. Low complexity predominate over residues 349–373 (ESSQSVPSMSISASSQSSSVNSLAD). Positions 349-377 (ESSQSVPSMSISASSQSSSVNSLADASDD) are disordered. Coiled-coil stretches lie at residues 457-650 (SALR…ECAM) and 755-876 (ILKR…EIEA). Disordered regions lie at residues 899–930 (FNQGYQAPPPGWPSRPVPRSGSHWSHGVQNTG) and 945–1025 (SASW…LSYS). Positions 905-914 (APPPGWPSRP) are enriched in pro residues. Residues 947-986 (SWGLHPPGSSSSLSALPSSSSSSSSSPSSSSGGRPGLLLL) are compositionally biased toward low complexity. Over residues 1007–1025 (SRSTSVTSQLSNGSHLSYS) the composition is skewed to polar residues.

It belongs to the protein kinase superfamily. STE Ser/Thr protein kinase family. STE20 subfamily. Mg(2+) is required as a cofactor.

It catalyses the reaction L-seryl-[protein] + ATP = O-phospho-L-seryl-[protein] + ADP + H(+). It carries out the reaction L-threonyl-[protein] + ATP = O-phospho-L-threonyl-[protein] + ADP + H(+). Serine/threonine-protein kinase involved in different processes such as apoptotic morphological changes, MAPK8/JNK and MAPK14/p38 MAPK signaling pathway. Its function is as follows. Activates the JNK MAP kinase pathway. This chain is Serine/threonine-protein kinase TAO2 (taok2), found in Xenopus laevis (African clawed frog).